Here is a 137-residue protein sequence, read N- to C-terminus: uncharacterized protein (137 aa).

An N-terminal signal peptide occupies residues 1-34 (MAALSRALGPLRTPAPPLWIGLFLVATGSQQSLA). Over residues 33–45 (LAQPLPGNTTEAT) the composition is skewed to polar residues. 2 disordered regions span residues 33–54 (LAQPLPGNTTEATPRSLRASGS) and 98–137 (VLSPLHRGPSGHTEASAQRSHMGKLKEPQPQDHKPGLGAS). Residue Asn-40 is glycosylated (N-linked (GlcNAc...) asparagine). Positions 121–137 (KLKEPQPQDHKPGLGAS) are enriched in basic and acidic residues.

The protein localises to the secreted. This is an uncharacterized protein from Homo sapiens (Human).